A 314-amino-acid polypeptide reads, in one-letter code: Putative peptide transport system permease protein BruAb2_1031 (314 aa).

6 helical membrane passes run 12-32 (AIPV…LLPG), 101-121 (LALL…VVAA), 135-155 (LALL…VILF), 177-197 (WLRS…GYLA), 237-257 (VSVL…SVVI), and 286-306 (MLFL…LYTI). One can recognise an ABC transmembrane type-1 domain in the interval 95-304 (LPVTISLALL…AINVLVDILY (210 aa)).

Belongs to the binding-protein-dependent transport system permease family. As to quaternary structure, the complex is composed of two ATP-binding proteins (BruAb2_1033 and BruAb2_1034), two transmembrane proteins (BruAb2_1031 and BruAb2_1032) and a solute-binding protein (BruAb2_1030).

The protein resides in the cell inner membrane. In terms of biological role, probably part of an ABC transporter complex that could be involved in peptide import. Probably responsible for the translocation of the substrate across the membrane. The sequence is that of Putative peptide transport system permease protein BruAb2_1031 from Brucella abortus biovar 1 (strain 9-941).